Reading from the N-terminus, the 391-residue chain is MGYPEVERRELLPAAAPRERGSQGCGCGGAPARAGEGNSCLLFLGFFGLSLALHLLTLCCYLELRSELRRERGAESRLGGSGTPGTSGTLSSLGGLDPDSPITSHLGQPSPKQQPLEPGEAALHSDSQDGHQMALLNFFFPDEKPYSEEESRRVRRNKRSKSNEGADGPVKNKKKGKKAGPPGPNGPPGPPGPPGPQGPPGIPGIPGIPGTTVMGPPGPPGPPGPQGPPGLQGPSGAADKAGTRENQPAVVHLQGQGSAIQVKNDLSGGVLNDWSRITMNPKVFKLHPRSGELEVLVDGTYFIYSQVEVYYINFTDFASYEVVVDEKPFLQCTRSIETGKTNYNTCYTAGVCLLKARQKIAVKMVHADISINMSKHTTFFGAIRLGEAPAS.

The Cytoplasmic portion of the chain corresponds to 1–41 (MGYPEVERRELLPAAAPRERGSQGCGCGGAPARAGEGNSCL). The helical; Signal-anchor for type II membrane protein transmembrane segment at 42-62 (LFLGFFGLSLALHLLTLCCYL) threads the bilayer. Residues 63-391 (ELRSELRRER…AIRLGEAPAS (329 aa)) are Extracellular-facing. 2 disordered regions span residues 73-127 (GAES…HSDS) and 146-245 (YSEE…GTRE). The span at 86–101 (TSGTLSSLGGLDPDSP) shows a compositional bias: low complexity. Residues 102-113 (ITSHLGQPSPKQ) show a composition bias toward polar residues. A Collagen-like domain is found at 180–229 (GPPGPNGPPGPPGPPGPQGPPGIPGIPGIPGTTVMGPPGPPGPPGPQGPP). Composition is skewed to pro residues over residues 181–203 (PPGPNGPPGPPGPPGPQGPPGIP) and 216–228 (PPGPPGPPGPQGP). Positions 249–385 (AVVHLQGQGS…HTTFFGAIRL (137 aa)) constitute a THD domain. Asn313 carries N-linked (GlcNAc...) asparagine glycosylation. A disulfide bond links Cys332 and Cys346. Asn372 carries an N-linked (GlcNAc...) asparagine glycan.

The protein belongs to the tumor necrosis factor family. In terms of assembly, homotrimer. The homotrimers may then dimerize and form higher-order oligomers. In terms of processing, N-glycosylated. Post-translationally, processing by furin produces a secreted form. In terms of tissue distribution, not abundant; expressed in specific cell types of ectodermal (but not mesodermal) origin of keratinocytes, hair follicles, sweat glands. Also in adult heart, liver, muscle, pancreas, prostate, fetal liver, uterus, small intestine and umbilical cord.

The protein localises to the cell membrane. It is found in the secreted. Its function is as follows. Cytokine which is involved in epithelial-mesenchymal signaling during morphogenesis of ectodermal organs. Functions as a ligand activating the DEATH-domain containing receptors EDAR and EDA2R. May also play a role in cell adhesion. Binds only to the receptor EDAR, while isoform 3 binds exclusively to the receptor EDA2R. In terms of biological role, binds only to the receptor EDA2R. This Homo sapiens (Human) protein is Ectodysplasin-A (EDA).